We begin with the raw amino-acid sequence, 432 residues long: Gamma-glutamyl phosphate reductase (432 aa).

Belongs to the gamma-glutamyl phosphate reductase family.

It is found in the cytoplasm. The catalysed reaction is L-glutamate 5-semialdehyde + phosphate + NADP(+) = L-glutamyl 5-phosphate + NADPH + H(+). It participates in amino-acid biosynthesis; L-proline biosynthesis; L-glutamate 5-semialdehyde from L-glutamate: step 2/2. Catalyzes the NADPH-dependent reduction of L-glutamate 5-phosphate into L-glutamate 5-semialdehyde and phosphate. The product spontaneously undergoes cyclization to form 1-pyrroline-5-carboxylate. The polypeptide is Gamma-glutamyl phosphate reductase (Corynebacterium glutamicum (strain R)).